A 527-amino-acid polypeptide reads, in one-letter code: Cyclin-L1 (527 aa).

Residues 1–37 (MASGPHPTSTAAAASASSAAPSAGGSSSGTTTTTTTT) are disordered. Cyclin-like stretches follow at residues 89 to 191 (ELIQ…RVLK) and 204 to 288 (KIIV…ETLR). Threonine 326 carries the post-translational modification Phosphothreonine. The tract at residues 327-527 (PALSTLGGFS…SRSGHGRHRR (201 aa)) is disordered. A phosphoserine mark is found at serine 336 and serine 339. Residues lysine 340 and lysine 348 each participate in a glycyl lysine isopeptide (Lys-Gly) (interchain with G-Cter in SUMO2) cross-link. Residues 343–353 (SPREVKAEEKS) show a composition bias toward basic and acidic residues. Phosphoserine occurs at positions 353 and 356. The span at 362–371 (VKKEPEDRQQ) shows a compositional bias: basic and acidic residues. A Glycyl lysine isopeptide (Lys-Gly) (interchain with G-Cter in SUMO2) cross-link involves residue lysine 363. A Phosphoserine modification is found at serine 375. Composition is skewed to basic residues over residues 383 to 419 (DSKR…RRSR), 439 to 453 (RRHH…KAKH), 461 to 477 (SNRH…RSQS), and 487 to 499 (KKHR…HRDR). Positions 391–433 (RSASRSRSRTRSRSRSHTPRRHYNNRRSRSGTYSSRSRSRSRS) are RS. Serine 446 is modified (phosphoserine). Residues 500-509 (RERSRSFERS) are compositionally biased toward basic and acidic residues. Residues 510–527 (HKGKHHGGSRSGHGRHRR) show a composition bias toward basic residues.

This sequence belongs to the cyclin family. Cyclin L subfamily. In terms of assembly, interacts with POLR2A via its hyperphosphorylated C-terminal domain (CTD). Interacts with CDK11A, CDK11B, CDK12 and CDK13. May form a ternary complex with CDK11B and casein kinase II (CKII). Interacts with pre-mRNA-splicing factors, including at least SRSF1, SRSF2 AND SRSF7/SLU7. Ubiquitous with higher level in liver; expressed in striatal neurons.

It localises to the nucleus speckle. The protein localises to the nucleus. The protein resides in the nucleoplasm. In terms of biological role, involved in pre-mRNA splicing. Functions in association with cyclin-dependent kinases (CDKs). May play a role in the regulation of RNA polymerase II (pol II). Inhibited by the CDK-specific inhibitor CDKN1A/p21. The polypeptide is Cyclin-L1 (Ccnl1) (Rattus norvegicus (Rat)).